We begin with the raw amino-acid sequence, 139 residues long: Actin-depolymerizing factor 1 (139 aa).

In terms of domain architecture, ADF-H spans 5–139 (ASGMAVHDDC…GLDVIQSRAN (135 aa)).

This sequence belongs to the actin-binding proteins ADF family.

Functionally, actin-depolymerizing protein. Severs actin filaments (F-actin) and binds to actin monomers. This Petunia hybrida (Petunia) protein is Actin-depolymerizing factor 1 (ADF1).